The chain runs to 451 residues: Exodeoxyribonuclease 7 large subunit (451 aa).

The protein belongs to the XseA family. Heterooligomer composed of large and small subunits.

It is found in the cytoplasm. It carries out the reaction Exonucleolytic cleavage in either 5'- to 3'- or 3'- to 5'-direction to yield nucleoside 5'-phosphates.. In terms of biological role, bidirectionally degrades single-stranded DNA into large acid-insoluble oligonucleotides, which are then degraded further into small acid-soluble oligonucleotides. The chain is Exodeoxyribonuclease 7 large subunit from Neisseria gonorrhoeae (strain ATCC 700825 / FA 1090).